Here is a 600-residue protein sequence, read N- to C-terminus: DDB1- and CUL4-associated factor 15 (600 aa).

Residues 1–30 (MAPSSKSERNSGAGSGGGGPGGAGGKRAAG) form a disordered region. Over residues 13-27 (AGSGGGGPGGAGGKR) the composition is skewed to gly residues. The residue at position 50 (serine 50) is a Phosphoserine. Zn(2+) is bound by residues cysteine 193, cysteine 196, cysteine 211, and histidine 214. Residues phenylalanine 231 and 234 to 235 (AF) contribute to the E7820 site. Residues 280–295 (PASPPEPQSPELPPAL) show a composition bias toward pro residues. The tract at residues 280 to 316 (PASPPEPQSPELPPALPSFCPEAAPARSSGSPEPSPA) is disordered. Residues serine 310 and serine 314 each carry the phosphoserine modification.

Component of the DCX(DCAF15) complex, also named CLR4(DCAF15) complex, composed of DCAF15, DDB1, cullin-4 (CUL4A or CUL4B), DDA1 and RBX1.

It participates in protein modification; protein ubiquitination. With respect to regulation, aryl sulfonamide anticancer drugs change the substrate specificity of DCAF15 by acting as a molecular glue that promotes binding between DCAF15 and weak affinity interactors, such as RBM39. Its function is as follows. Substrate-recognition component of the DCX(DCAF15) complex, a cullin-4-RING E3 ubiquitin-protein ligase complex that mediates ubiquitination and degradation of target proteins. The DCX(DCAF15) complex acts as a regulator of the natural killer (NK) cells effector functions, possibly by mediating ubiquitination and degradation of cohesin subunits SMC1A and SMC3. May play a role in the activation of antigen-presenting cells (APC) and their interaction with NK cells. In terms of biological role, binding of aryl sulfonamide anticancer drugs, such as indisulam (E7070) or E7820, change the substrate specificity of the DCX(DCAF15) complex, leading to promote ubiquitination and degradation of splicing factor RBM39. RBM39 degradation results in splicing defects and death in cancer cell lines. Aryl sulfonamide anticancer drugs change the substrate specificity of DCAF15 by acting as a molecular glue that promotes binding between DCAF15 and weak affinity interactor RBM39. Aryl sulfonamide anticancer drugs also promote ubiquitination and degradation of RBM23 and PRPF39. The polypeptide is DDB1- and CUL4-associated factor 15 (Homo sapiens (Human)).